The sequence spans 117 residues: Large ribosomal subunit protein bL20 (117 aa).

The protein belongs to the bacterial ribosomal protein bL20 family.

In terms of biological role, binds directly to 23S ribosomal RNA and is necessary for the in vitro assembly process of the 50S ribosomal subunit. It is not involved in the protein synthesizing functions of that subunit. The protein is Large ribosomal subunit protein bL20 of Rickettsia bellii (strain OSU 85-389).